The primary structure comprises 374 residues: Acid phosphatase-like protein XcAP-1 (374 aa).

A signal peptide spans 1–17 (TTIILLIAFAAIQLSKA). Residue valine 25 participates in serotonin binding. 3 disulfides stabilise this stretch: cysteine 144–cysteine 372, cysteine 165–cysteine 219, and cysteine 345–cysteine 349. Aspartate 245, aspartate 249, asparagine 271, and glutamine 283 together coordinate serotonin.

This sequence belongs to the histidine acid phosphatase family.

Its subcellular location is the secreted. Functionally, probably modulates blood feeding of fleas on vertebrate species by binding and sequestering different mediators involved in the host response. Binds biogenic amines: serotonin, adrenaline and noradrenaline. Binds leukotriene C4. Does not bind histamine, leukotriene B4, leukotriene D4, leukotriene E4, ADP, and stable analogs of thromboxane A2: U-46619 and cTXA2. This chain is Acid phosphatase-like protein XcAP-1, found in Xenopsylla cheopis (Oriental rat flea).